Consider the following 225-residue polypeptide: Ribonuclease T (225 aa).

The tract at residues 1–21 (MSEDHFDEEHEGHGGGGGSRH) is disordered. The 175-residue stretch at 33 to 207 (VVVDVETGGF…YDTEKTAELF (175 aa)) folds into the Exonuclease domain. Residues Asp-36, Glu-38, His-194, and Asp-199 each contribute to the Mg(2+) site. Catalysis depends on His-194, which acts as the Proton donor/acceptor.

Belongs to the RNase T family. Homodimer. It depends on Mg(2+) as a cofactor.

In terms of biological role, trims short 3' overhangs of a variety of RNA species, leaving a one or two nucleotide 3' overhang. Responsible for the end-turnover of tRNA: specifically removes the terminal AMP residue from uncharged tRNA (tRNA-C-C-A). Also appears to be involved in tRNA biosynthesis. This is Ribonuclease T from Pseudomonas syringae pv. tomato (strain ATCC BAA-871 / DC3000).